Reading from the N-terminus, the 288-residue chain is Bifunctional protein FolD (288 aa).

NADP(+)-binding positions include glycine 164 to serine 166, serine 193, and isoleucine 234.

This sequence belongs to the tetrahydrofolate dehydrogenase/cyclohydrolase family. Homodimer.

The catalysed reaction is (6R)-5,10-methylene-5,6,7,8-tetrahydrofolate + NADP(+) = (6R)-5,10-methenyltetrahydrofolate + NADPH. The enzyme catalyses (6R)-5,10-methenyltetrahydrofolate + H2O = (6R)-10-formyltetrahydrofolate + H(+). Its pathway is one-carbon metabolism; tetrahydrofolate interconversion. Functionally, catalyzes the oxidation of 5,10-methylenetetrahydrofolate to 5,10-methenyltetrahydrofolate and then the hydrolysis of 5,10-methenyltetrahydrofolate to 10-formyltetrahydrofolate. The chain is Bifunctional protein FolD from Nitratidesulfovibrio vulgaris (strain DSM 19637 / Miyazaki F) (Desulfovibrio vulgaris).